A 401-amino-acid chain; its full sequence is S-adenosylmethionine synthase (401 aa).

135-140 provides a ligand contact to ATP; the sequence is GHGSGD.

Belongs to the AdoMet synthase 2 family. Requires Mg(2+) as cofactor.

The enzyme catalyses L-methionine + ATP + H2O = S-adenosyl-L-methionine + phosphate + diphosphate. The protein operates within amino-acid biosynthesis; S-adenosyl-L-methionine biosynthesis; S-adenosyl-L-methionine from L-methionine: step 1/1. Functionally, catalyzes the formation of S-adenosylmethionine from methionine and ATP. This is S-adenosylmethionine synthase (mat) from Methanothermobacter thermautotrophicus (strain ATCC 29096 / DSM 1053 / JCM 10044 / NBRC 100330 / Delta H) (Methanobacterium thermoautotrophicum).